We begin with the raw amino-acid sequence, 157 residues long: Endoribonuclease YbeY (157 aa).

Residues His123, His127, and His133 each contribute to the Zn(2+) site.

It belongs to the endoribonuclease YbeY family. Zn(2+) is required as a cofactor.

It localises to the cytoplasm. Its function is as follows. Single strand-specific metallo-endoribonuclease involved in late-stage 70S ribosome quality control and in maturation of the 3' terminus of the 16S rRNA. The sequence is that of Endoribonuclease YbeY from Desulfitobacterium hafniense (strain Y51).